The primary structure comprises 323 residues: Acetyl-coenzyme A carboxylase carboxyl transferase subunit alpha (323 aa).

In terms of domain architecture, CoA carboxyltransferase C-terminal spans 39 to 293 (RLSKKSQQLT…RRALADSLRQ (255 aa)).

The protein belongs to the AccA family. As to quaternary structure, acetyl-CoA carboxylase is a heterohexamer composed of biotin carboxyl carrier protein (AccB), biotin carboxylase (AccC) and two subunits each of ACCase subunit alpha (AccA) and ACCase subunit beta (AccD).

It localises to the cytoplasm. The enzyme catalyses N(6)-carboxybiotinyl-L-lysyl-[protein] + acetyl-CoA = N(6)-biotinyl-L-lysyl-[protein] + malonyl-CoA. The protein operates within lipid metabolism; malonyl-CoA biosynthesis; malonyl-CoA from acetyl-CoA: step 1/1. Functionally, component of the acetyl coenzyme A carboxylase (ACC) complex. First, biotin carboxylase catalyzes the carboxylation of biotin on its carrier protein (BCCP) and then the CO(2) group is transferred by the carboxyltransferase to acetyl-CoA to form malonyl-CoA. In Paraburkholderia phymatum (strain DSM 17167 / CIP 108236 / LMG 21445 / STM815) (Burkholderia phymatum), this protein is Acetyl-coenzyme A carboxylase carboxyl transferase subunit alpha.